The chain runs to 489 residues: MSKNQEKYSQLRSIIPEMRRVKHIYFVGIGGAGMGGIAEVLVNEGYKLSGSDIAENAVTQRLASLGAKIHIGHREEQVHGADVVVVSTAISADNPELLEAQALRIPVVQRAEMLAELMRYRHGVAVAGTHGKTTTTSLIASVYGQAERDPTFVIGGLLNSAGTNARLGHSRYLIAEADESDASFLHLQPMVSVVTNIEADHMDTYEGDFEKLKSTFIDFLHNLPFYGVAVMCIDDPVVRELLPKVGRKIVTYGFSEDADVQALNFVQEAYLSRFTLRRAGVEDMEVVVNLPGQHNVLNALAAIAVATEDEIDDAAIIQALADFQGIGRRFEQLGCFDTNKGEMVLVDDYGHHPSEVAATIKAAKAGWPEKRLVMVYQPHRYSRTRDLYDDFVEVLSQVDCLLLLDVYAAGESPVPGADSRALCRSIRQRGQLDPIFVSDSEQLLSLLPDVLQAGDLVLTQGAGNIGAIAKQLSLSSLGFDLAASGTGKE.

128-134 (GTHGKTT) is an ATP binding site.

This sequence belongs to the MurCDEF family.

The protein resides in the cytoplasm. It carries out the reaction UDP-N-acetyl-alpha-D-muramate + L-alanine + ATP = UDP-N-acetyl-alpha-D-muramoyl-L-alanine + ADP + phosphate + H(+). It participates in cell wall biogenesis; peptidoglycan biosynthesis. Functionally, cell wall formation. This is UDP-N-acetylmuramate--L-alanine ligase from Shewanella sediminis (strain HAW-EB3).